The sequence spans 333 residues: Serine/threonine-protein phosphatase 4 catalytic subunit 1 (333 aa).

A disordered region spans residues 1–28 (MALACTDSANSTFSRVDSPTSGPSDQLT). The segment covering 7–27 (DSANSTFSRVDSPTSGPSDQL) has biased composition (polar residues). The Mn(2+) site is built by D79, H81, D107, and N139. The active-site Proton donor is the H140. 2 residues coordinate Mn(2+): H189 and H264. A Leucine methyl ester modification is found at L333.

This sequence belongs to the PPP phosphatase family. PP-4 (PP-X) subfamily. As to quaternary structure, serine/threonine-protein phosphatase 4 (PP4) occurs in different assemblies of the catalytic and one or more regulatory subunits. The regulatory subunits are likely to be ppfr-1, ppfr-2, ppfr-4 and smk-1. Interacts with mei-1. It depends on Mn(2+) as a cofactor. Post-translationally, methylation at the C-terminal Leu-333 is critical for interactions with regulatory subunits.

It is found in the cytoplasm. Its subcellular location is the cytoskeleton. The protein resides in the microtubule organizing center. The protein localises to the centrosome. The enzyme catalyses O-phospho-L-seryl-[protein] + H2O = L-seryl-[protein] + phosphate. The catalysed reaction is O-phospho-L-threonyl-[protein] + H2O = L-threonyl-[protein] + phosphate. Its function is as follows. Protein phosphatase which plays an essential role in meiosis and in early embryonic mitosis. During spermatocyte meiosis and the first embryonic mitosis, regulates centrosome maturation, and thus spindle formation, by recruiting some of the components of the pericentriolar material (PCM). During oocyte meiosis I, regulates meiotic chromosome dynamics including synapsis-independent chromosome pairing, restriction of synapsis to homologous chromosomes, programmed DNA double-strand break initiation and crossover formation resulting in chiasma formation. During oocyte meiosis II and probably together with regulatory subunit ppfr-1, may regulate microtubule severing by dephosphorylating and activating mei-1, a component of the katanin microtubule severing complex. The chain is Serine/threonine-protein phosphatase 4 catalytic subunit 1 from Caenorhabditis elegans.